An 82-amino-acid polypeptide reads, in one-letter code: Omega-conotoxin-like TxO6 (82 aa).

Positions 1–22 (MKLTCVVIVAVLFLTAWTLVMA) are cleaved as a signal peptide. Residues 23 to 50 (DDSNNGLANLFSKSRDEMEDPEAAKLEK) constitute a propeptide that is removed on maturation. 3 cysteine pairs are disulfide-bonded: C53/C71, C60/C76, and C70/C81.

The protein belongs to the conotoxin O1 superfamily. Expressed by the venom duct.

The protein localises to the secreted. In terms of biological role, omega-conotoxins act at presynaptic membranes, they bind and block voltage-gated calcium channels (Cav). The polypeptide is Omega-conotoxin-like TxO6 (Conus textile (Cloth-of-gold cone)).